Consider the following 196-residue polypeptide: Peptidyl-tRNA hydrolase (196 aa).

Residue Tyr18 participates in tRNA binding. His23 (proton acceptor) is an active-site residue. TRNA is bound by residues Phe69, Asn71, and Asn117.

The protein belongs to the PTH family. In terms of assembly, monomer.

It is found in the cytoplasm. It carries out the reaction an N-acyl-L-alpha-aminoacyl-tRNA + H2O = an N-acyl-L-amino acid + a tRNA + H(+). Hydrolyzes ribosome-free peptidyl-tRNAs (with 1 or more amino acids incorporated), which drop off the ribosome during protein synthesis, or as a result of ribosome stalling. In terms of biological role, catalyzes the release of premature peptidyl moieties from peptidyl-tRNA molecules trapped in stalled 50S ribosomal subunits, and thus maintains levels of free tRNAs and 50S ribosomes. The chain is Peptidyl-tRNA hydrolase from Vibrio cholerae serotype O1 (strain ATCC 39315 / El Tor Inaba N16961).